A 122-amino-acid polypeptide reads, in one-letter code: Large ribosomal subunit protein uL14c (122 aa).

Belongs to the universal ribosomal protein uL14 family. In terms of assembly, part of the 50S ribosomal subunit.

The protein localises to the plastid. It localises to the chloroplast. Functionally, binds to 23S rRNA. This chain is Large ribosomal subunit protein uL14c, found in Adiantum capillus-veneris (Maidenhair fern).